Consider the following 352-residue polypeptide: C-C chemokine receptor type 5 (352 aa).

The Extracellular segment spans residues M1 to A30. At Y3 the chain carries Sulfotyrosine. O-linked (GalNAc...) serine glycans are attached at residues S6 and S7. A sulfotyrosine mark is found at Y10 and Y14. 2 disulfides stabilise this stretch: C20–C269 and C101–C178. A helical membrane pass occupies residues Q31 to C58. Residues K59–Y68 lie on the Cytoplasmic side of the membrane. The helical transmembrane segment at L69 to Y89 threads the bilayer. Residues A90 to Q102 lie on the Extracellular side of the membrane. A helical transmembrane segment spans residues F103–I124. The Cytoplasmic segment spans residues D125 to T141. Residues V142 to F166 traverse the membrane as a helical segment. Residues T167–M198 lie on the Extracellular side of the membrane. The helical transmembrane segment at V199 to L218 threads the bilayer. The Cytoplasmic portion of the chain corresponds to K219–R235. The chain crosses the membrane as a helical span at residues L236–Y260. At P261–Q277 the chain is on the extracellular side. Residues A278–G301 traverse the membrane as a helical segment. The Cytoplasmic segment spans residues E302–L352. S-palmitoyl cysteine attachment occurs at residues C321, C323, and C324. Phosphoserine; by BARK1 occurs at positions 337, 342, and 349.

Belongs to the G-protein coupled receptor 1 family. In terms of assembly, interacts with PRAF2. Efficient ligand binding to CCL3/MIP-1alpha and CCL4/MIP-1beta requires sulfation, O-glycosylation and sialic acid modifications. Glycosylation on Ser-6 is required for efficient binding of CCL4. Interacts with GRK2. Interacts with ARRB1 and ARRB2. Interacts with CNIH4. Interacts with S100A4; this interaction stimulates T-lymphocyte chemotaxis. Sulfated on at least 2 of the N-terminal tyrosines. Sulfation is required for efficient binding of the chemokines, CCL3 and CCL4. Post-translationally, palmitoylation in the C-terminal is important for cell surface expression. In terms of processing, phosphorylation on serine residues in the C-terminal is stimulated by binding CC chemokines especially by APO-RANTES. O-glycosylated, but not N-glycosylated. Ser-6 appears to be the major site even if Ser-7 may be also O-glycosylated. Also sialylated glycans present which contribute to chemokine binding. Ser-17 may also be glycosylated and, if so, with small moieties such as a T-antigen.

It localises to the cell membrane. Functionally, receptor for a number of inflammatory CC-chemokines including CCL3/MIP-1-alpha, CCL4/MIP-1-beta and RANTES and subsequently transduces a signal by increasing the intracellular calcium ion level. May play a role in the control of granulocytic lineage proliferation or differentiation. Participates in T-lymphocyte migration to the infection site by acting as a chemotactic receptor. This Saimiri sciureus (Common squirrel monkey) protein is C-C chemokine receptor type 5 (CCR5).